We begin with the raw amino-acid sequence, 236 residues long: Sperm flagellar protein 1 (236 aa).

The region spanning 7-112 (EEALHQLYLW…VLIPLRQRLE (106 aa)) is the Calponin-homology (CH) domain. Residues 115 to 176 (QRRRKQGAGS…PRPPAYNRAL (62 aa)) form a disordered region. Residues 183–236 (VLQIAEKEQELLASQETVQVLQMKVRRLEHLLQLKNVRIEDLSRRLQQAERKQR) form an essential for homodimerization and microtubule bundling activity region.

In terms of assembly, homodimer. Interacts with actin, TJP1, CGN and CDH1. As to expression, expressed in the intestinal epithelial cells (at protein level).

Its subcellular location is the cytoplasm. It localises to the cell projection. The protein resides in the cilium. It is found in the flagellum. The protein localises to the cytoskeleton. Its subcellular location is the cilium axoneme. It localises to the apical cell membrane. The protein resides in the basolateral cell membrane. It is found in the stress fiber. The protein localises to the microvillus. Its subcellular location is the lamellipodium. It localises to the filopodium. In terms of biological role, microtubule-associated protein involved in the stabilization of microtubules along the axis of migration during radial intercalation. Promotes the establishment and stabilization of an axis of microtubules required for the active migration of cells into the outer epithelium. Microtubule-associated protein that promotes microtubule bundling and stabilizes microtubules against depolymerization in response to cold shock. Essential for ciliary central apparatus formation which requires both its microtubule-binding and bundling activities and for ciliary localization of HYDIN and SPAG6 in ependymal cilia. Binds actin in intestinal epithelial cells (IECs), essential for IECs survival and contributes to formation of filopodia and lamellipodia in migrating IECs. Regulates planar cell polarity signaling pathway and asymmetric microtubule accumulation in ciliated epithelia. The chain is Sperm flagellar protein 1 (SPEF1) from Homo sapiens (Human).